A 1203-amino-acid polypeptide reads, in one-letter code: Plasma membrane calcium-transporting ATPase 4 (1203 aa).

The Cytoplasmic portion of the chain corresponds to 1–92 (MTNPSGHNLP…NMIPPKKPKT (92 aa)). Serine 13 carries the phosphoserine modification. A helical transmembrane segment spans residues 93 to 113 (FLELVWEALQDVTLIILEIAA). Residues 114 to 150 (IISLVLSFYRPPGGENEICGHIVSNPEEDEEGETGWI) lie on the Extracellular side of the membrane. Residues 151-171 (EGAAILASVIIVVFVTAFNDW) form a helical membrane-spanning segment. At 172-356 (SKEKQFRGLQ…KEKSVLQGKL (185 aa)) the chain is on the cytoplasmic side. Residues 294–319 (DDEKKKKGKKQGVSENRNKAKTQDGV) are disordered. A phosphoserine mark is found at serine 328 and serine 334. Residues 330-349 (EGLDSEEKEKKASKGPKKEK) form a disordered region. Basic and acidic residues predominate over residues 334-349 (SEEKEKKASKGPKKEK). Residues 357–376 (TRLAVQIGKAGLIMSILTVL) form a helical membrane-spanning segment. The Extracellular portion of the chain corresponds to 377 to 409 (ILILYFVVDNFVIQRRAWLPECTPVYIQYFVKF). A helical membrane pass occupies residues 410–427 (FIIGVTVLVVAVPEGLPL). The Cytoplasmic portion of the chain corresponds to 428–840 (AVTISLAYSV…MWGRNVYDSI (413 aa)). Aspartate 465 acts as the 4-aspartylphosphate intermediate in catalysis. Residues aspartate 785 and aspartate 789 each contribute to the Mg(2+) site. Residues 841 to 860 (SKFLQFQLTVNVVAVIVAFS) form a helical membrane-spanning segment. At 861 to 870 (GACITQDSPL) the chain is on the extracellular side. A helical transmembrane segment spans residues 871-891 (KAVQMLWVNLIMDTFASLALA). Residues 892 to 911 (TEPPTDSLLRRRPYGRNKPL) lie on the Cytoplasmic side of the membrane. The chain crosses the membrane as a helical span at residues 912-934 (ISRTMMKNILGHAVYQLGIVFLL). At 935–952 (VFAGDKLFDIDSGRKAPL) the chain is on the extracellular side. Residues 953–974 (NSPPSQHYTIVFNTFVLMQLFN) traverse the membrane as a helical segment. At 975 to 993 (EINSRKIHGEKNVFAGVYR) the chain is on the cytoplasmic side. The chain crosses the membrane as a helical span at residues 994-1015 (NIIFCSVVLGTFFCQILIVEVG). The Extracellular portion of the chain corresponds to 1016–1025 (GKPFSCTNLT). A helical membrane pass occupies residues 1026–1047 (MEQWMWCLFIGIGELLWGQVIS). Topologically, residues 1048–1203 (AIPTKSLKFL…SPLQSQETPV (156 aa)) are cytoplasmic. Serine 1064 and serine 1070 each carry phosphoserine. The interval 1086-1103 (LRRGQILWVRGLNRIQTQ) is calmodulin-binding subdomain A. Threonine 1102 is modified (phosphothreonine; by PKC). The residue at position 1103 (glutamine 1103) is a Phosphoserine. A calmodulin-binding subdomain B region spans residues 1104 to 1113 (IRVVKVFHSF). Phosphoserine is present on residues arginine 1114, aspartate 1115, isoleucine 1126, and serine 1144.

The protein belongs to the cation transport ATPase (P-type) (TC 3.A.3) family. Type IIB subfamily. As to quaternary structure, interacts with PDZD11. Interacts with SLC35G1 and STIM1. Interacts with calmodulin. Ubiquitously expressed. Not detected in liver. The highest levels are found in uterus and stomach. Isoform XA is found in uterus, brain, stomach, small intestine, colon and pancreas. Isoform XB is found in uterus, skeletal muscle, lung, kidney, spleen, stomach, small intestine and pancreas. Isoform ZA is found in testis and isoform ZB is found in testis and heart.

It is found in the cell membrane. It localises to the cell projection. Its subcellular location is the cilium. The protein resides in the flagellum membrane. It catalyses the reaction Ca(2+)(in) + ATP + H2O = Ca(2+)(out) + ADP + phosphate + H(+). With respect to regulation, activated by calcium/calmodulin. Its function is as follows. Calcium/calmodulin-regulated and magnesium-dependent enzyme that catalyzes the hydrolysis of ATP coupled with the transport of calcium out of the cell. By regulating sperm cell calcium homeostasis, may play a role in sperm motility. This chain is Plasma membrane calcium-transporting ATPase 4, found in Rattus norvegicus (Rat).